The primary structure comprises 235 residues: ATP phosphoribosyltransferase (235 aa).

This sequence belongs to the ATP phosphoribosyltransferase family. Short subfamily. As to quaternary structure, heteromultimer composed of HisG and HisZ subunits.

It localises to the cytoplasm. The enzyme catalyses 1-(5-phospho-beta-D-ribosyl)-ATP + diphosphate = 5-phospho-alpha-D-ribose 1-diphosphate + ATP. The protein operates within amino-acid biosynthesis; L-histidine biosynthesis; L-histidine from 5-phospho-alpha-D-ribose 1-diphosphate: step 1/9. In terms of biological role, catalyzes the condensation of ATP and 5-phosphoribose 1-diphosphate to form N'-(5'-phosphoribosyl)-ATP (PR-ATP). Has a crucial role in the pathway because the rate of histidine biosynthesis seems to be controlled primarily by regulation of HisG enzymatic activity. This Synechococcus sp. (strain JA-2-3B'a(2-13)) (Cyanobacteria bacterium Yellowstone B-Prime) protein is ATP phosphoribosyltransferase.